Reading from the N-terminus, the 302-residue chain is MIEVQTTSQLQEQLQDAREQGKTIGFVPTMGALHGGHQSLVRACAQTCDLVVVSIYVNPLQFGPHEDYHEYPRQLEKDRVLAEEAGCDVLFCPTDEEIYPDGYTQTVHVKQGANVLCGKSRPGHFDGVATVVLKLFMLVQPDFAFFGEKDAQQVAIIKQLVKEFFLPVTIVACPTVREDDGLAKSSRNANLTPAERQVAPKLYAALRDAAKSPTSQLSDLVQQVRQHLAALPLGCIDYVEAYEYPSLKKVEQSDGIVILALAYQFSKARLIDHILIDMNNRNGGLNDVSDNDESKIASCTGD.

30–37 is a binding site for ATP; the sequence is MGALHGGH. His-37 serves as the catalytic Proton donor. Gln-61 serves as a coordination point for (R)-pantoate. Gln-61 provides a ligand contact to beta-alanine. 147 to 150 serves as a coordination point for ATP; the sequence is GEKD. Position 153 (Gln-153) interacts with (R)-pantoate. ATP-binding positions include Val-176 and 184–187; that span reads KSSR.

Belongs to the pantothenate synthetase family. As to quaternary structure, homodimer.

It is found in the cytoplasm. The enzyme catalyses (R)-pantoate + beta-alanine + ATP = (R)-pantothenate + AMP + diphosphate + H(+). It functions in the pathway cofactor biosynthesis; (R)-pantothenate biosynthesis; (R)-pantothenate from (R)-pantoate and beta-alanine: step 1/1. Catalyzes the condensation of pantoate with beta-alanine in an ATP-dependent reaction via a pantoyl-adenylate intermediate. The polypeptide is Pantothenate synthetase (Shouchella clausii (strain KSM-K16) (Alkalihalobacillus clausii)).